Here is a 429-residue protein sequence, read N- to C-terminus: Mannose-6-phosphate isomerase (429 aa).

The Zn(2+) site is built by Q110, H112, E137, and H282. R301 is a catalytic residue.

The protein belongs to the mannose-6-phosphate isomerase type 1 family. The cofactor is Zn(2+).

It localises to the cytoplasm. It carries out the reaction D-mannose 6-phosphate = D-fructose 6-phosphate. Its pathway is nucleotide-sugar biosynthesis; GDP-alpha-D-mannose biosynthesis; alpha-D-mannose 1-phosphate from D-fructose 6-phosphate: step 1/2. Functionally, involved in the synthesis of the GDP-mannose and dolichol-phosphate-mannose required for a number of critical mannosyl transfer reactions. This Candida glabrata (strain ATCC 2001 / BCRC 20586 / JCM 3761 / NBRC 0622 / NRRL Y-65 / CBS 138) (Yeast) protein is Mannose-6-phosphate isomerase (PMI1).